A 308-amino-acid polypeptide reads, in one-letter code: Ribonuclease H2 subunit B (308 aa).

Position 2 is an N-acetylalanine (Ala-2). Lys-292 carries the N6-acetyllysine modification. A Phosphoserine modification is found at Ser-293.

This sequence belongs to the RNase H2 subunit B family. The RNase H2 complex is a heterotrimer composed of the catalytic subunit RNASEH2A and the non-catalytic subunits RNASEH2B and RNASEH2C.

It localises to the nucleus. Non catalytic subunit of RNase H2, an endonuclease that specifically degrades the RNA of RNA:DNA hybrids. Participates in DNA replication, possibly by mediating the removal of lagging-strand Okazaki fragment RNA primers during DNA replication. Mediates the excision of single ribonucleotides from DNA:RNA duplexes. The protein is Ribonuclease H2 subunit B (Rnaseh2b) of Mus musculus (Mouse).